The primary structure comprises 273 residues: NAD(P)H-hydrate epimerase (273 aa).

The region spanning 18–257 is the YjeF N-terminal domain; it reads ALKLDEDLIN…LLAMEYDVQE (240 aa). 71 to 75 contributes to the (6S)-NADPHX binding site; the sequence is NNGGD. 2 residues coordinate K(+): asparagine 72 and aspartate 146. (6S)-NADPHX is bound by residues 150–157, tyrosine 162, and aspartate 188; that span reads GFSFHGGP. Position 191 (serine 191) interacts with K(+).

The protein belongs to the NnrE/AIBP family. It depends on K(+) as a cofactor.

The enzyme catalyses (6R)-NADHX = (6S)-NADHX. It catalyses the reaction (6R)-NADPHX = (6S)-NADPHX. In terms of biological role, catalyzes the epimerization of the S- and R-forms of NAD(P)HX, a damaged form of NAD(P)H that is a result of enzymatic or heat-dependent hydration. This is a prerequisite for the S-specific NAD(P)H-hydrate dehydratase to allow the repair of both epimers of NAD(P)HX. This is NAD(P)H-hydrate epimerase from Giardia intestinalis (strain ATCC 50803 / WB clone C6) (Giardia lamblia).